Consider the following 257-residue polypeptide: S-methyl-5'-thioadenosine phosphorylase (257 aa).

Phosphate contacts are provided by residues S10, 50 to 51 (RH), and 83 to 84 (TA). M180 lines the substrate pocket. Residue T181 participates in phosphate binding. Residue 204-206 (DYD) participates in substrate binding.

This sequence belongs to the PNP/MTAP phosphorylase family. MTAP subfamily. As to quaternary structure, homohexamer. Dimer of a homotrimer.

The catalysed reaction is S-methyl-5'-thioadenosine + phosphate = 5-(methylsulfanyl)-alpha-D-ribose 1-phosphate + adenine. It catalyses the reaction adenosine + phosphate = alpha-D-ribose 1-phosphate + adenine. It functions in the pathway amino-acid biosynthesis; L-methionine biosynthesis via salvage pathway; S-methyl-5-thio-alpha-D-ribose 1-phosphate from S-methyl-5'-thioadenosine (phosphorylase route): step 1/1. In terms of biological role, catalyzes the reversible phosphorylation of S-methyl-5'-thioadenosine (MTA) to adenine and 5-methylthioribose-1-phosphate. Involved in the breakdown of MTA, a major by-product of polyamine biosynthesis. Responsible for the first step in the methionine salvage pathway after MTA has been generated from S-adenosylmethionine. Has broad substrate specificity with 6-aminopurine nucleosides as preferred substrates. Can also use adenosine as substrate to form ribose 1-phosphate. This is S-methyl-5'-thioadenosine phosphorylase from Thermococcus kodakarensis (strain ATCC BAA-918 / JCM 12380 / KOD1) (Pyrococcus kodakaraensis (strain KOD1)).